The primary structure comprises 128 residues: Probable 4-amino-4-deoxy-L-arabinose-phosphoundecaprenol flippase subunit ArnF (128 aa).

At 1–2 (MG) the chain is on the cytoplasmic side. A helical transmembrane segment spans residues 3–23 (LMWGLFSVIIASAAQLSLGFA). Residues 24-35 (ASHLPPMTHLWD) are Periplasmic-facing. The chain crosses the membrane as a helical span at residues 36–56 (FIAALLAFGLDARILLLGLLG). Residues 57-76 (YLLSVFCWYKTLHKLALSKA) are Cytoplasmic-facing. A helical transmembrane segment spans residues 77 to 97 (YALLSMSYVLVWIASMVLPGW). Residues 98-100 (EGT) lie on the Periplasmic side of the membrane. The chain crosses the membrane as a helical span at residues 101 to 121 (FSLKALLGVACIMSGLMLIFL). The Cytoplasmic segment spans residues 122–128 (PTTKQRY).

The protein belongs to the ArnF family. As to quaternary structure, heterodimer of ArnE and ArnF.

It localises to the cell inner membrane. The protein operates within bacterial outer membrane biogenesis; lipopolysaccharide biosynthesis. Its function is as follows. Translocates 4-amino-4-deoxy-L-arabinose-phosphoundecaprenol (alpha-L-Ara4N-phosphoundecaprenol) from the cytoplasmic to the periplasmic side of the inner membrane. The protein is Probable 4-amino-4-deoxy-L-arabinose-phosphoundecaprenol flippase subunit ArnF of Escherichia coli O127:H6 (strain E2348/69 / EPEC).